A 170-amino-acid polypeptide reads, in one-letter code: Urease accessory protein UreE (170 aa).

This sequence belongs to the UreE family.

Its subcellular location is the cytoplasm. In terms of biological role, involved in urease metallocenter assembly. Binds nickel. Probably functions as a nickel donor during metallocenter assembly. The chain is Urease accessory protein UreE from Helicobacter pylori (strain J99 / ATCC 700824) (Campylobacter pylori J99).